Consider the following 509-residue polypeptide: Maturase K (509 aa).

This sequence belongs to the intron maturase 2 family. MatK subfamily.

Its subcellular location is the plastid. It is found in the chloroplast. Its function is as follows. Usually encoded in the trnK tRNA gene intron. Probably assists in splicing its own and other chloroplast group II introns. This chain is Maturase K, found in Nicotiana tomentosiformis (Tobacco).